The chain runs to 355 residues: Probable dual-specificity RNA methyltransferase RlmN (355 aa).

Residue Glu-92 is the Proton acceptor of the active site. In terms of domain architecture, Radical SAM core spans 98–330 (FHYGLSVCVT…TELGINCGVR (233 aa)). Cys-105 and Cys-341 are joined by a disulfide. Positions 112, 116, and 119 each coordinate [4Fe-4S] cluster. Residues 164-165 (GE), Ser-196, 219-221 (SLH), and Asn-297 contribute to the S-adenosyl-L-methionine site. The S-methylcysteine intermediate role is filled by Cys-341.

This sequence belongs to the radical SAM superfamily. RlmN family. It depends on [4Fe-4S] cluster as a cofactor.

It localises to the cytoplasm. It catalyses the reaction adenosine(2503) in 23S rRNA + 2 reduced [2Fe-2S]-[ferredoxin] + 2 S-adenosyl-L-methionine = 2-methyladenosine(2503) in 23S rRNA + 5'-deoxyadenosine + L-methionine + 2 oxidized [2Fe-2S]-[ferredoxin] + S-adenosyl-L-homocysteine. The enzyme catalyses adenosine(37) in tRNA + 2 reduced [2Fe-2S]-[ferredoxin] + 2 S-adenosyl-L-methionine = 2-methyladenosine(37) in tRNA + 5'-deoxyadenosine + L-methionine + 2 oxidized [2Fe-2S]-[ferredoxin] + S-adenosyl-L-homocysteine. Specifically methylates position 2 of adenine 2503 in 23S rRNA and position 2 of adenine 37 in tRNAs. In Oceanobacillus iheyensis (strain DSM 14371 / CIP 107618 / JCM 11309 / KCTC 3954 / HTE831), this protein is Probable dual-specificity RNA methyltransferase RlmN.